A 291-amino-acid polypeptide reads, in one-letter code: Oligopeptide transport system permease protein OppC (291 aa).

Transmembrane regions (helical) follow at residues 22–42 (VASL…PPLL), 85–105 (MLIG…VGAI), 116–136 (TLMW…IAIV), 142–162 (NSAN…MISS), 209–229 (ALNV…GFGI), and 247–267 (ATAF…ILVC). Residues 81 to 272 (MQKSMLIGVC…LILVCANLTG (192 aa)) form the ABC transmembrane type-1 domain.

This sequence belongs to the binding-protein-dependent transport system permease family. OppBC subfamily. As to quaternary structure, the complex is composed of an ATP-binding protein (OppD), two transmembrane proteins (OppB and OppC) and a solute-binding protein (OppA).

Its subcellular location is the cell inner membrane. In terms of biological role, part of the ABC transporter complex OppABCD involved in the uptake of oligopeptides. Responsible for the translocation of the substrate across the membrane. In Mycobacterium bovis (strain ATCC BAA-935 / AF2122/97), this protein is Oligopeptide transport system permease protein OppC.